The sequence spans 202 residues: Potassium-transporting ATPase KdpC subunit (202 aa).

A helical membrane pass occupies residues 7–27 (PAIFVLLALTLITGLLYPLAM). The tract at residues 66–103 (FHGRPSATSTADPNDSTKTVPAPYNAANSSGSNLGPTS) is disordered. Polar residues-rich tracts occupy residues 71–84 (SATS…STKT) and 91–101 (AANSSGSNLGP).

Belongs to the KdpC family. As to quaternary structure, the system is composed of three essential subunits: KdpA, KdpB and KdpC.

The protein resides in the cell inner membrane. Functionally, part of the high-affinity ATP-driven potassium transport (or Kdp) system, which catalyzes the hydrolysis of ATP coupled with the electrogenic transport of potassium into the cytoplasm. This subunit acts as a catalytic chaperone that increases the ATP-binding affinity of the ATP-hydrolyzing subunit KdpB by the formation of a transient KdpB/KdpC/ATP ternary complex. The polypeptide is Potassium-transporting ATPase KdpC subunit (Bradyrhizobium sp. (strain ORS 278)).